Consider the following 57-residue polypeptide: UPF0337 protein SAV_1088 (57 aa).

Basic and acidic residues-rich tracts occupy residues 1 to 15 (MAGD…EQAK) and 36 to 57 (QAEK…VFKH). The segment at 1–57 (MAGDQKAKAKMEQAKGKAKAAAGRAVGNERMAAEGQAEKSKGDARQAKEKTKDVFKH) is disordered.

This sequence belongs to the UPF0337 (CsbD) family.

The polypeptide is UPF0337 protein SAV_1088 (Streptomyces avermitilis (strain ATCC 31267 / DSM 46492 / JCM 5070 / NBRC 14893 / NCIMB 12804 / NRRL 8165 / MA-4680)).